The following is a 160-amino-acid chain: Transcription elongation factor GreA (160 aa).

A coiled-coil region spans residues Met-1–Arg-72.

Belongs to the GreA/GreB family.

Necessary for efficient RNA polymerase transcription elongation past template-encoded arresting sites. The arresting sites in DNA have the property of trapping a certain fraction of elongating RNA polymerases that pass through, resulting in locked ternary complexes. Cleavage of the nascent transcript by cleavage factors such as GreA or GreB allows the resumption of elongation from the new 3'terminus. GreA releases sequences of 2 to 3 nucleotides. The sequence is that of Transcription elongation factor GreA from Streptococcus thermophilus (strain ATCC BAA-491 / LMD-9).